A 288-amino-acid chain; its full sequence is Bifunctional protein FolD (288 aa).

NADP(+)-binding positions include 165 to 167 (GRS) and serine 190.

This sequence belongs to the tetrahydrofolate dehydrogenase/cyclohydrolase family. Homodimer.

The catalysed reaction is (6R)-5,10-methylene-5,6,7,8-tetrahydrofolate + NADP(+) = (6R)-5,10-methenyltetrahydrofolate + NADPH. The enzyme catalyses (6R)-5,10-methenyltetrahydrofolate + H2O = (6R)-10-formyltetrahydrofolate + H(+). It functions in the pathway one-carbon metabolism; tetrahydrofolate interconversion. In terms of biological role, catalyzes the oxidation of 5,10-methylenetetrahydrofolate to 5,10-methenyltetrahydrofolate and then the hydrolysis of 5,10-methenyltetrahydrofolate to 10-formyltetrahydrofolate. In Bdellovibrio bacteriovorus (strain ATCC 15356 / DSM 50701 / NCIMB 9529 / HD100), this protein is Bifunctional protein FolD.